A 274-amino-acid polypeptide reads, in one-letter code: Thiazole synthase (274 aa).

The active-site Schiff-base intermediate with DXP is the Lys115. Residues Gly176, Ala202–Gly203, and Asn224–Ser225 each bind 1-deoxy-D-xylulose 5-phosphate.

This sequence belongs to the ThiG family. Homotetramer. Forms heterodimers with either ThiH or ThiS.

It localises to the cytoplasm. The catalysed reaction is [ThiS sulfur-carrier protein]-C-terminal-Gly-aminoethanethioate + 2-iminoacetate + 1-deoxy-D-xylulose 5-phosphate = [ThiS sulfur-carrier protein]-C-terminal Gly-Gly + 2-[(2R,5Z)-2-carboxy-4-methylthiazol-5(2H)-ylidene]ethyl phosphate + 2 H2O + H(+). It functions in the pathway cofactor biosynthesis; thiamine diphosphate biosynthesis. Catalyzes the rearrangement of 1-deoxy-D-xylulose 5-phosphate (DXP) to produce the thiazole phosphate moiety of thiamine. Sulfur is provided by the thiocarboxylate moiety of the carrier protein ThiS. In vitro, sulfur can be provided by H(2)S. The chain is Thiazole synthase from Psychrobacter arcticus (strain DSM 17307 / VKM B-2377 / 273-4).